The chain runs to 92 residues: MARSIKKGPFIEKSLYQKVLASSGKEKRVVIKTYSRASTIIPEMVSLTISVYNGKSFIPVYITEDLVGHKLGEFSPTRIFRGHAKSDKKGRK.

This sequence belongs to the universal ribosomal protein uS19 family.

In terms of biological role, protein S19 forms a complex with S13 that binds strongly to the 16S ribosomal RNA. This is Small ribosomal subunit protein uS19 from Borrelia recurrentis (strain A1).